Here is a 139-residue protein sequence, read N- to C-terminus: Endoribonuclease YbeY (139 aa).

3 residues coordinate Zn(2+): H107, H111, and D117.

This sequence belongs to the endoribonuclease YbeY family. The cofactor is Zn(2+).

It localises to the cytoplasm. In terms of biological role, single strand-specific metallo-endoribonuclease involved in late-stage 70S ribosome quality control and in maturation of the 3' terminus of the 16S rRNA. The chain is Endoribonuclease YbeY from Azobacteroides pseudotrichonymphae genomovar. CFP2.